Here is a 542-residue protein sequence, read N- to C-terminus: Chaperonin GroEL (542 aa).

ATP contacts are provided by residues 29-32 (TLGP), 86-90 (DGTTT), glycine 413, and aspartate 494.

This sequence belongs to the chaperonin (HSP60) family. As to quaternary structure, forms a cylinder of 14 subunits composed of two heptameric rings stacked back-to-back. Interacts with the co-chaperonin GroES.

It localises to the cytoplasm. It catalyses the reaction ATP + H2O + a folded polypeptide = ADP + phosphate + an unfolded polypeptide.. Together with its co-chaperonin GroES, plays an essential role in assisting protein folding. The GroEL-GroES system forms a nano-cage that allows encapsulation of the non-native substrate proteins and provides a physical environment optimized to promote and accelerate protein folding. This is Chaperonin GroEL from Endomicrobium trichonymphae.